Consider the following 113-residue polypeptide: Photosystem II reaction center Psb28 protein (113 aa).

This sequence belongs to the Psb28 family. In terms of assembly, part of the photosystem II complex.

It localises to the cellular thylakoid membrane. The polypeptide is Photosystem II reaction center Psb28 protein (Nostoc punctiforme (strain ATCC 29133 / PCC 73102)).